The primary structure comprises 187 residues: Probable chorismate pyruvate-lyase (187 aa).

Residues Arg76, Leu114, and Glu173 each contribute to the substrate site.

The protein belongs to the UbiC family.

It localises to the cytoplasm. It catalyses the reaction chorismate = 4-hydroxybenzoate + pyruvate. It participates in cofactor biosynthesis; ubiquinone biosynthesis. In terms of biological role, removes the pyruvyl group from chorismate, with concomitant aromatization of the ring, to provide 4-hydroxybenzoate (4HB) for the ubiquinone pathway. The protein is Probable chorismate pyruvate-lyase of Shewanella amazonensis (strain ATCC BAA-1098 / SB2B).